Consider the following 214-residue polypeptide: MGLRDWLRTVCCCCGCECLEERALPEKEPLVSDNNPYSSFGATLVRDDEKNLWSMPHDVSHTEADDDRTLYNLIVIRNQQAKDSEEWQKLNYDIHTLRQVRREVRNRWKCILEDLGFQKEADSLLSVTKLSTISDSKNTRKAREMLLKLAEETNIFPTSWELSERYLFVVDRLIALDAAEEFFKLARRTYPKKPGVPCLADGQKELHYLPFPSP.

The Cholesterol-binding sequence motif signature appears at 162 to 172; sequence LSERYLFVVDR. S213 carries the post-translational modification Phosphoserine.

Belongs to the melanoregulin family. In terms of assembly, identified in a complex with RILP and DCTN1; interacts directly with RILP, but does not interact directly with DCTN1. Interacts with PRPH2. In terms of processing, palmitoylated. Palmitoylation is required to maintain the protein at the melanosome membrane. Expressed in photoreceptor cells (at protein level).

Its subcellular location is the apical cell membrane. It is found in the melanosome membrane. The protein resides in the lysosome membrane. It localises to the cytoplasmic vesicle membrane. Its function is as follows. Probably functions as a cargo-recognition protein that couples cytoplasmic vesicles to the transport machinery. Plays a role in hair pigmentation, a process that involves shedding of melanosome-containing vesicles from melanocytes, followed by phagocytosis of the melanosome-containing vesicles by keratinocytes. Functions on melanosomes as receptor for RILP and the complex formed by RILP and DCTN1, and thereby contributes to retrograde melanosome transport from the cell periphery to the center. Overexpression causes accumulation of late endosomes and/or lysosomes at the microtubule organising center (MTOC) at the center of the cell. Probably binds cholesterol and requires the presence of cholesterol in membranes to function in microtubule-mediated retrograde organelle transport. Binds phosphatidylinositol 3-phosphate, phosphatidylinositol 4-phosphate, phosphatidylinositol 5-phosphate and phosphatidylinositol 3,5-bisphosphate, but not phosphatidylinositol 3,4-bisphosphate or phosphatidylinositol 4,5-bisphosphate. Required for normal phagosome clearing and normal activation of lysosomal enzymes in lysosomes from retinal pigment epithelium cells. Required for normal degradation of the lipofuscin component N-retinylidene-N-retinylethanolamine (A2E) in the eye. May function in membrane fusion and regulate the biogenesis of disk membranes of photoreceptor rod cells. The sequence is that of Melanoregulin (MREG) from Homo sapiens (Human).